Consider the following 510-residue polypeptide: NAD(P)H-quinone oxidoreductase subunit 2 B, chloroplastic (510 aa).

The next 13 membrane-spanning stretches (helical) occupy residues 24–44 (LLLF…GLIL), 57–77 (IPWL…ALLF), 99–119 (IFQF…VEYI), 124–144 (MAIT…MFLC), 149–169 (LITI…LSGY), 183–203 (YLLM…WLYG), 227–247 (PGIS…LSLA), 295–315 (WHLL…LIAI), 323–343 (MLAY…IVGD), 354–374 (YMLF…LFGL), 395–415 (ALSL…AGFF), 418–438 (LHLF…IGLL), and 484–504 (MIVC…IIAI).

The protein belongs to the complex I subunit 2 family. As to quaternary structure, NDH is composed of at least 16 different subunits, 5 of which are encoded in the nucleus.

The protein resides in the plastid. Its subcellular location is the chloroplast thylakoid membrane. It carries out the reaction a plastoquinone + NADH + (n+1) H(+)(in) = a plastoquinol + NAD(+) + n H(+)(out). The enzyme catalyses a plastoquinone + NADPH + (n+1) H(+)(in) = a plastoquinol + NADP(+) + n H(+)(out). NDH shuttles electrons from NAD(P)H:plastoquinone, via FMN and iron-sulfur (Fe-S) centers, to quinones in the photosynthetic chain and possibly in a chloroplast respiratory chain. The immediate electron acceptor for the enzyme in this species is believed to be plastoquinone. Couples the redox reaction to proton translocation, and thus conserves the redox energy in a proton gradient. This chain is NAD(P)H-quinone oxidoreductase subunit 2 B, chloroplastic, found in Citrus sinensis (Sweet orange).